Consider the following 362-residue polypeptide: 3-isopropylmalate dehydrogenase (362 aa).

75–88 (GPKWANLPPTEQPE) contributes to the NAD(+) binding site. Arginine 96, arginine 106, arginine 135, and aspartate 224 together coordinate substrate. Aspartate 224, aspartate 248, and aspartate 252 together coordinate Mg(2+). An NAD(+)-binding site is contributed by 282 to 294 (GSAPDIAGLGVAN).

It belongs to the isocitrate and isopropylmalate dehydrogenases family. LeuB type 1 subfamily. Homodimer. Mg(2+) is required as a cofactor. Requires Mn(2+) as cofactor.

It localises to the cytoplasm. The enzyme catalyses (2R,3S)-3-isopropylmalate + NAD(+) = 4-methyl-2-oxopentanoate + CO2 + NADH. Its pathway is amino-acid biosynthesis; L-leucine biosynthesis; L-leucine from 3-methyl-2-oxobutanoate: step 3/4. Catalyzes the oxidation of 3-carboxy-2-hydroxy-4-methylpentanoate (3-isopropylmalate) to 3-carboxy-4-methyl-2-oxopentanoate. The product decarboxylates to 4-methyl-2 oxopentanoate. The protein is 3-isopropylmalate dehydrogenase of Colwellia psychrerythraea (strain 34H / ATCC BAA-681) (Vibrio psychroerythus).